Reading from the N-terminus, the 485-residue chain is Probable glycine dehydrogenase (decarboxylating) subunit 2 (485 aa).

Position 273 is an N6-(pyridoxal phosphate)lysine (K273).

Belongs to the GcvP family. C-terminal subunit subfamily. In terms of assembly, the glycine cleavage system is composed of four proteins: P, T, L and H. In this organism, the P 'protein' is a heterodimer of two subunits. Pyridoxal 5'-phosphate serves as cofactor.

The enzyme catalyses N(6)-[(R)-lipoyl]-L-lysyl-[glycine-cleavage complex H protein] + glycine + H(+) = N(6)-[(R)-S(8)-aminomethyldihydrolipoyl]-L-lysyl-[glycine-cleavage complex H protein] + CO2. The glycine cleavage system catalyzes the degradation of glycine. The P protein binds the alpha-amino group of glycine through its pyridoxal phosphate cofactor; CO(2) is released and the remaining methylamine moiety is then transferred to the lipoamide cofactor of the H protein. The chain is Probable glycine dehydrogenase (decarboxylating) subunit 2 from Caldanaerobacter subterraneus subsp. tengcongensis (strain DSM 15242 / JCM 11007 / NBRC 100824 / MB4) (Thermoanaerobacter tengcongensis).